The sequence spans 302 residues: Homoserine O-acetyltransferase (302 aa).

Cys142 acts as the Acyl-thioester intermediate in catalysis. Substrate-binding residues include Lys163 and Ser192. Residue His235 is the Proton acceptor of the active site. Glu237 is a catalytic residue. Arg249 provides a ligand contact to substrate.

It belongs to the MetA family.

It localises to the cytoplasm. The enzyme catalyses L-homoserine + acetyl-CoA = O-acetyl-L-homoserine + CoA. It participates in amino-acid biosynthesis; L-methionine biosynthesis via de novo pathway; O-acetyl-L-homoserine from L-homoserine: step 1/1. Functionally, transfers an acetyl group from acetyl-CoA to L-homoserine, forming acetyl-L-homoserine. The chain is Homoserine O-acetyltransferase from Geobacillus kaustophilus (strain HTA426).